A 425-amino-acid chain; its full sequence is Histidine--tRNA ligase (425 aa).

The protein belongs to the class-II aminoacyl-tRNA synthetase family. As to quaternary structure, homodimer.

The protein resides in the cytoplasm. The catalysed reaction is tRNA(His) + L-histidine + ATP = L-histidyl-tRNA(His) + AMP + diphosphate + H(+). The sequence is that of Histidine--tRNA ligase from Desulforapulum autotrophicum (strain ATCC 43914 / DSM 3382 / VKM B-1955 / HRM2) (Desulfobacterium autotrophicum).